The sequence spans 314 residues: Olfactory receptor 1E5 (314 aa).

The Extracellular portion of the chain corresponds to 1–25 (MMGQNQTSISDFLLLGLPIQPEQQN). N5 is a glycosylation site (N-linked (GlcNAc...) asparagine). A helical transmembrane segment spans residues 26–49 (LCYALFLAMYLTTLLGNLLIIVLI). The Cytoplasmic portion of the chain corresponds to 50–57 (RLDSHLHT). The helical transmembrane segment at 58–79 (PMYLFLSNLSFSDLCFSSVTIP) threads the bilayer. Topologically, residues 80–100 (KLLQNMQNQDPSIPYADCLTQ) are extracellular. C97 and C189 are oxidised to a cystine. A helical membrane pass occupies residues 101–120 (MYFFLLFGDLESFLLVAMAY). Topologically, residues 121–139 (DRYVAICFPLHYTAIMSPM) are cytoplasmic. A helical membrane pass occupies residues 140–158 (LCLSLVALSWVLTTFHAML). The Extracellular segment spans residues 159 to 196 (HTLLMARLCFCADNVIPHFFCDMSALLKLACSDTRVNE). The chain crosses the membrane as a helical span at residues 197–219 (WVIFIMGGLIVVIPFLLILGSYA). Residues 220 to 236 (RIVSSILKVPSSKGICK) lie on the Cytoplasmic side of the membrane. A helical transmembrane segment spans residues 237 to 260 (AFSTCGSHLSVVSLFYGTIIGLYL). At 261-272 (CPSANSSTLKET) the chain is on the extracellular side. An N-linked (GlcNAc...) asparagine glycan is attached at N265. A helical membrane pass occupies residues 273 to 292 (VMAMMYTVVTPMLNPFIYSL). Residues 293-314 (RNRDMKGALERVIXKRKNPFLL) are Cytoplasmic-facing.

It belongs to the G-protein coupled receptor 1 family.

It localises to the cell membrane. In terms of biological role, odorant receptor. This is Olfactory receptor 1E5 (OR1E5) from Pan troglodytes (Chimpanzee).